The chain runs to 329 residues: uncharacterized protein (329 aa).

The next 7 membrane-spanning stretches (helical) occupy residues 29–49 (IVLW…AISH), 78–98 (VLVA…CWMG), 120–140 (KKWL…SLLV), 164–184 (WMIG…LIYL), 217–237 (YFFL…LLVI), 260–280 (FFWT…SFIV), and 299–319 (GSSL…LLFI).

To M.pneumoniae MPN_129.

The protein resides in the cell membrane. This is an uncharacterized protein from Mycoplasma pneumoniae (strain ATCC 29342 / M129 / Subtype 1) (Mycoplasmoides pneumoniae).